A 108-amino-acid polypeptide reads, in one-letter code: UPF0235 protein Rpal_0418 (108 aa).

This sequence belongs to the UPF0235 family.

The polypeptide is UPF0235 protein Rpal_0418 (Rhodopseudomonas palustris (strain TIE-1)).